The chain runs to 327 residues: Fructose-1,6-bisphosphatase class 1 (327 aa).

4 residues coordinate Mg(2+): glutamate 84, aspartate 103, leucine 105, and aspartate 106. Residues 106 to 109 (DGSS), asparagine 197, and lysine 263 each bind substrate. Glutamate 269 is a Mg(2+) binding site.

It belongs to the FBPase class 1 family. Homotetramer. It depends on Mg(2+) as a cofactor.

The protein resides in the cytoplasm. It carries out the reaction beta-D-fructose 1,6-bisphosphate + H2O = beta-D-fructose 6-phosphate + phosphate. Its pathway is carbohydrate biosynthesis; gluconeogenesis. The polypeptide is Fructose-1,6-bisphosphatase class 1 (Idiomarina loihiensis (strain ATCC BAA-735 / DSM 15497 / L2-TR)).